Consider the following 105-residue polypeptide: UPF0060 membrane protein Ajs_1326 (105 aa).

4 helical membrane-spanning segments follow: residues 4 to 24, 30 to 50, 60 to 80, and 82 to 102; these read FALF…PYLW, SAWL…LLTL, AAYG…VDGI, and PTAW…LIMF.

Belongs to the UPF0060 family.

It is found in the cell inner membrane. This Acidovorax sp. (strain JS42) protein is UPF0060 membrane protein Ajs_1326.